The chain runs to 358 residues: Snurportin-1 (358 aa).

Methionine 1 is modified (N-acetylmethionine). 2 disordered regions span residues 1–39 and 69–89; these read MEELSQALASSFSVSQELNSTAAPHPRLSQYKSKYSSLE and DWTGMESGEEEKKKDEEEMDL. A necessary for interaction with KPNB1 and m3G-cap U1 and U5 snRNP import receptor activity region spans residues 1–65; the sequence is MEELSQALAS…LDYVNHARRL (65 aa). The tract at residues 1–160 is necessary for interaction with XPO1; that stretch reads MEELSQALAS…NRFSSLLPGG (160 aa). 2 stretches are compositionally biased toward polar residues: residues 7 to 22 and 30 to 39; these read ALASSFSVSQELNSTA and QYKSKYSSLE. In terms of domain architecture, IBB spans 11–73; the sequence is SFSVSQELNS…RLAEDDWTGM (63 aa). Serine 75 is modified (phosphoserine). Residues 128–130 form an interaction with m3G-cap structure region; sequence GKR. Residues 210–329 form a necessary for binding to the m3G-cap structure region; the sequence is MNSKLPEEEG…DTKEKLTHKA (120 aa). Positions 315 to 341 are enriched in basic and acidic residues; it reads KRSQEDTKEKLTHKASENGHYELEHLS. The interval 315-358 is disordered; that stretch reads KRSQEDTKEKLTHKASENGHYELEHLSTPKLRSPPHSSESLMDS. Over residues 349–358 the composition is skewed to polar residues; sequence PHSSESLMDS. Position 351 is a phosphoserine (serine 351).

Belongs to the snurportin family. As to quaternary structure, component of an import snRNP complex composed of KPNB1, SNUPN, SMN1 and ZNF259. Component of a nuclear export receptor complex composed of KPNB1, Ran, SNUPN and XPO1. Found in a trimeric export complex with SNUPN, Ran and XPO1. Interacts (via IBB domain) with KPNB1; the interaction is direct. Interacts with DDX20, IPO7, SMN1, SNRPB and XPO1. Interacts directly with XPO1. Its interaction with XPO1 and binding to m3G-cap U snRNPs appears to be mutually exclusive. Can form homomers.

Its subcellular location is the nucleus. The protein localises to the cytoplasm. In terms of biological role, functions as an U snRNP-specific nuclear import adapter. Involved in the trimethylguanosine (m3G)-cap-dependent nuclear import of U snRNPs. Binds specifically to the terminal m3G-cap U snRNAs. The polypeptide is Snurportin-1 (Snupn) (Rattus norvegicus (Rat)).